Here is a 551-residue protein sequence, read N- to C-terminus: Rhodopsin kinase grk7-a (551 aa).

The residue at position 36 (serine 36) is a Phosphoserine. One can recognise an RGS domain in the interval 57–174; it reads YQSICVEQPI…QNSPFYDRFL (118 aa). A Protein kinase domain is found at 189 to 451; it reads FYEFRILGKG…DDDPRKHAFF (263 aa). ATP is bound by residues 195 to 203 and lysine 218; that span reads LGKGGFGEV. The active-site Proton acceptor is aspartate 314. Residues 452–517 form the AGC-kinase C-terminal domain; it reads KSINFQRLEA…GAIPISWQKE (66 aa). At serine 487 the chain carries Phosphoserine. Residues 529 to 551 are disordered; the sequence is DPSREATGGGGNSGEKSGVCSIL. Over residues 542-551 the composition is skewed to low complexity; the sequence is GEKSGVCSIL. Cysteine 548 bears the Cysteine methyl ester mark. Cysteine 548 is lipidated: S-geranylgeranyl cysteine. The propeptide at 549-551 is removed in mature form; the sequence is SIL.

Belongs to the protein kinase superfamily. AGC Ser/Thr protein kinase family. GPRK subfamily. In terms of processing, autophosphorylated in vitro at Ser-487. Phosphorylation at Ser-36 is regulated by light and activated by cAMP.

Its subcellular location is the membrane. The catalysed reaction is L-threonyl-[rhodopsin] + ATP = O-phospho-L-threonyl-[rhodopsin] + ADP + H(+). It carries out the reaction L-seryl-[rhodopsin] + ATP = O-phospho-L-seryl-[rhodopsin] + ADP + H(+). Functionally, retina-specific kinase involved in the shutoff of the photoresponse and adaptation to changing light conditions via cone opsin phosphorylation, including rhodopsin (RHO). This Xenopus laevis (African clawed frog) protein is Rhodopsin kinase grk7-a (grk7-a).